Here is a 142-residue protein sequence, read N- to C-terminus: Large ribosomal subunit protein mL42 (142 aa).

The N-terminal 31 residues, 1 to 31 (MAAAVKWAISNRTIWKHLLPIQNGALSSACH), are a transit peptide targeting the mitochondrion.

This sequence belongs to the mitochondrion-specific ribosomal protein mL42 family. Component of the mitochondrial ribosome large subunit (39S) which comprises a 16S rRNA and about 50 distinct proteins. Component of the mitochondrial ribosome small subunit (28S) which comprises a 12S rRNA and about 30 distinct proteins.

The protein localises to the mitochondrion. The polypeptide is Large ribosomal subunit protein mL42 (Mrpl42) (Mus musculus (Mouse)).